Here is a 364-residue protein sequence, read N- to C-terminus: Dimethylsulfoniopropionate demethylase DmdA (364 aa).

It belongs to the GcvT family. DmdA subfamily.

The catalysed reaction is S,S-dimethyl-beta-propiothetin + (6S)-5,6,7,8-tetrahydrofolate = 3-(methylsulfanyl)propanoate + (6S)-5-methyl-5,6,7,8-tetrahydrofolate + H(+). Its function is as follows. Involved in the assimilation of dimethylsulphoniopropionate (DMSP), an important compound in the fixation of carbon in marine phytoplankton, by mediating demethylation of dimethylsulfoniopropionate (DMSP) to methyl-mercaptopropionate (MMPA). The intracellular concentration of DMSP is estimated to be 70 mM. The protein is Dimethylsulfoniopropionate demethylase DmdA of Ruegeria pomeroyi (strain ATCC 700808 / DSM 15171 / DSS-3) (Silicibacter pomeroyi).